A 490-amino-acid chain; its full sequence is AP-5 complex subunit mu-1 (490 aa).

The MHD domain maps to 206 to 476; sequence KPQVSISITE…LISSDYYIWN (271 aa).

The protein belongs to the adaptor complexes medium subunit family. As to quaternary structure, probably part of the adaptor protein complex 5 (AP-5) a tetramer composed of AP5B1, AP5M1, AP5S1 and AP5Z1. As to expression, expressed in various tumor cell lines including Jurkat, Hep-G2 and HeLa.

Its subcellular location is the cytoplasm. It is found in the cytosol. It localises to the late endosome membrane. The protein localises to the lysosome membrane. Its function is as follows. As part of AP-5, a probable fifth adaptor protein complex it may be involved in endosomal transport. According to PubMed:18395520, it may play a role in cell death. This chain is AP-5 complex subunit mu-1 (AP5M1), found in Homo sapiens (Human).